Reading from the N-terminus, the 593-residue chain is NADH-quinone oxidoreductase subunit C/D (593 aa).

The tract at residues 1-184 is NADH dehydrogenase I subunit C; that stretch reads MTADNALYIP…DPYSLTLAKQ (184 aa). The interval 208–593 is NADH dehydrogenase I subunit D; sequence DYMFLNLGPN…IDFVMADVDR (386 aa).

This sequence in the N-terminal section; belongs to the complex I 30 kDa subunit family. It in the C-terminal section; belongs to the complex I 49 kDa subunit family. NDH-1 is composed of 13 different subunits. Subunits NuoB, CD, E, F, and G constitute the peripheral sector of the complex.

The protein localises to the cell inner membrane. The catalysed reaction is a quinone + NADH + 5 H(+)(in) = a quinol + NAD(+) + 4 H(+)(out). Functionally, NDH-1 shuttles electrons from NADH, via FMN and iron-sulfur (Fe-S) centers, to quinones in the respiratory chain. The immediate electron acceptor for the enzyme in this species is believed to be ubiquinone. Couples the redox reaction to proton translocation (for every two electrons transferred, four hydrogen ions are translocated across the cytoplasmic membrane), and thus conserves the redox energy in a proton gradient. The chain is NADH-quinone oxidoreductase subunit C/D from Pseudomonas syringae pv. tomato (strain ATCC BAA-871 / DC3000).